The chain runs to 554 residues: Glutamine--tRNA ligase (554 aa).

A 'HIGH' region motif is present at residues 34–44 (PEPNGYLHIGH). ATP is bound by residues 35–37 (EPN) and 41–47 (HIGHAKS). Residues aspartate 67 and tyrosine 212 each coordinate L-glutamine. Residues threonine 231, 261-262 (RL), and 269-271 (MSK) each bind ATP. Residues 268–272 (VMSKR) carry the 'KMSKS' region motif. The segment at 317–324 (TKQDNTIE) is interaction with tRNA.

The protein belongs to the class-I aminoacyl-tRNA synthetase family. In terms of assembly, monomer.

The protein localises to the cytoplasm. The catalysed reaction is tRNA(Gln) + L-glutamine + ATP = L-glutaminyl-tRNA(Gln) + AMP + diphosphate. This Escherichia coli O17:K52:H18 (strain UMN026 / ExPEC) protein is Glutamine--tRNA ligase.